Here is a 379-residue protein sequence, read N- to C-terminus: Probable pectin lyase A (379 aa).

A signal peptide spans 1 to 20; the sequence is MKYSTIFSAAAAVFAGSAAA. 2 disulfide bridges follow: C83-C102 and C92-C226. N-linked (GlcNAc...) asparagine glycosylation is present at N129. The active site involves R256. A disulfide bridge connects residues C322 and C330.

It belongs to the polysaccharide lyase 1 family.

It is found in the secreted. It carries out the reaction Eliminative cleavage of (1-&gt;4)-alpha-D-galacturonan methyl ester to give oligosaccharides with 4-deoxy-6-O-methyl-alpha-D-galact-4-enuronosyl groups at their non-reducing ends.. Its function is as follows. Pectinolytic enzymes consist of four classes of enzymes: pectin lyase, polygalacturonase, pectin methylesterase and rhamnogalacturonase. Among pectinolytic enzymes, pectin lyase is the most important in depolymerization of pectin, since it cleaves internal glycosidic bonds of highly methylated pectins. This Aspergillus niger (strain ATCC MYA-4892 / CBS 513.88 / FGSC A1513) protein is Probable pectin lyase A (pelA).